The sequence spans 246 residues: MyoD family inhibitor domain-containing protein (246 aa).

Disordered stretches follow at residues 1–93 (MSQE…EEET) and 134–164 (KIQS…ASPE). The Extracellular portion of the chain corresponds to 1 to 170 (MSQEREPFSP…ASPEDGCVHC (170 aa)). The span at 63 to 87 (EDNSNSQPIKAQPQRLPQPNTSALE) shows a compositional bias: polar residues. The MDFI domain maps to 74–246 (QPQRLPQPNT…MECCGICFPS (173 aa)). A helical membrane pass occupies residues 171–188 (ILTCLFCEFLTLCNIVVG). Topologically, residues 189 to 246 (QASCGICTSEACCCCCTEEMGDDCNCPCDMDCGIMDACCESSDCLEICMECCGICFPS) are cytoplasmic.

It belongs to the MDFI family. As to expression, expressed broadly at a low level in the early embryo.

The protein resides in the cytoplasm. It is found in the cell membrane. Its subcellular location is the secreted. Functionally, required to control the activity of various transcription factors through their sequestration in the cytoplasm. Retains nuclear Zic proteins in the cytoplasm and inhibits their transcriptional activation. Required for dorsoanterior development. Necessary for siamois to activate downstream target genes, including gsc, during execution of the dorsal organizer program. Also regulates the transcriptional activity of TCF7L1/TCF3 by interacting directly with TCF7L1/TCF3 and preventing it from binding DNA. Involved in the development of lymphatic vessel valves. It is required to promote lymphatic endothelial cell migration, in a process that involves down-regulation of integrin beta 1 activation and control of cell adhesion to the extracellular matrix. The chain is MyoD family inhibitor domain-containing protein from Xenopus laevis (African clawed frog).